Consider the following 87-residue polypeptide: Small ribosomal subunit protein bS20 (87 aa).

Residues Met-1 to Ala-15 show a composition bias toward basic residues. Disordered regions lie at residues Met-1 to Lys-22 and Lys-64 to Ala-87.

Belongs to the bacterial ribosomal protein bS20 family.

Its function is as follows. Binds directly to 16S ribosomal RNA. The sequence is that of Small ribosomal subunit protein bS20 from Hyphomonas neptunium (strain ATCC 15444).